The chain runs to 683 residues: Zinc finger protein 418 (683 aa).

Residues 48–123 (VTIEDVTVYF…TPKQGQLRQK (76 aa)) enclose the KRAB domain. Positions 102–120 (QSLSQTEAPQVRTPKQGQL) are enriched in polar residues. Disordered regions lie at residues 102-124 (QSLS…RQKP) and 209-247 (DIPN…QHRL). The span at 225–239 (FHRDKNNSESDEYKK) shows a compositional bias: basic and acidic residues. 14 consecutive C2H2-type zinc fingers follow at residues 287–309 (YECH…QRRH), 315–337 (YKCG…CRVH), 343–365 (FECL…QRTH), 371–393 (YECS…QRTH), 399–421 (YECG…QRVH), 427–449 (YHCE…SKIH), 455–477 (YECG…QRTH), 483–505 (YECR…RRIH), 511–533 (YECE…QRVH), 539–561 (YKCE…QRTH), 567–589 (YECA…QKIH), 595–617 (YHCD…QRVH), 623–645 (YTCG…RRIH), and 651–673 (YECD…QLLH).

It belongs to the krueppel C2H2-type zinc-finger protein family.

It localises to the nucleus. Its function is as follows. Transcriptional repressor. May play a role as regulator of the ubiquitin-proteasome system and autophagy-lysosomal pathway. This chain is Zinc finger protein 418, found in Rattus norvegicus (Rat).